The primary structure comprises 256 residues: NAD-dependent protein deacylase 2 (256 aa).

The Deacetylase sirtuin-type domain occupies 1-256; the sequence is MDSHSPIATV…MPQVVSHIYR (256 aa). NAD(+) is bound by residues 25 to 44 and 108 to 111; these read GAGLSADSGMPTYRGLGGLY and QNID. Catalysis depends on His-128, which acts as the Proton acceptor. Residues Cys-136, Cys-139, Cys-158, and Cys-161 each coordinate Zn(2+). Residues 199 to 201, 225 to 227, and Ala-243 each bind NAD(+); these read GTT and NPG.

This sequence belongs to the sirtuin family. Class III subfamily. It depends on Zn(2+) as a cofactor.

Its subcellular location is the cytoplasm. It catalyses the reaction N(6)-acetyl-L-lysyl-[protein] + NAD(+) + H2O = 2''-O-acetyl-ADP-D-ribose + nicotinamide + L-lysyl-[protein]. In terms of biological role, NAD-dependent protein deacetylase which modulates the activities of several proteins which are inactive in their acetylated form. The sequence is that of NAD-dependent protein deacylase 2 (cobB2) from Pseudomonas aeruginosa (strain ATCC 15692 / DSM 22644 / CIP 104116 / JCM 14847 / LMG 12228 / 1C / PRS 101 / PAO1).